The following is a 3473-amino-acid chain: AP2/ERF domain-containing protein PFD0985w (3473 aa).

Disordered regions lie at residues 35 to 61 (NNII…NNNN), 366 to 450 (KMER…HLVC), 647 to 704 (NNNN…INAK), 750 to 801 (NIIK…RKKK), 1096 to 1196 (VDNN…MNMN), 1300 to 1328 (DNTS…NSRG), 1388 to 1418 (HLRS…GAER), 1773 to 1807 (NNTG…NNKV), and 1864 to 1898 (IGED…NNLS). Composition is skewed to low complexity over residues 44–61 (NGHN…NNNN), 396–442 (NNND…NSNN), and 647–666 (NNNN…NNNN). Residues 683-694 (TGDKHETSKKED) show a composition bias toward basic and acidic residues. Low complexity predominate over residues 751 to 768 (IIKSDNVNNNNNNNNNNN). A compositionally biased stretch (basic residues) spans 785–801 (NKKHKKKNIHDNNRKKK). Residues 1098-1156 (NNNNNNNNNNNNNVNNISNNGTNLEENANNANNANNPNNANNPNNANNSNNADYVNDYN) show a composition bias toward low complexity. A compositionally biased stretch (acidic residues) spans 1160-1171 (KEEDDDDEEEDN). A compositionally biased stretch (low complexity) spans 1182-1196 (TNYNININGENMNMN). Composition is skewed to polar residues over residues 1314–1326 (VGSN…NNNS) and 1390–1412 (RSSN…SSMR). Over residues 1773 to 1805 (NNTGTTQNNNKYGTNSNNNNNNNNNNNNNNNNN) the composition is skewed to low complexity. The segment covering 1881–1893 (LKRRKNGNSKRAK) has biased composition (basic residues). Positions 1957-2011 (PLPTGVYFDSARKLWRCQWKENGKFKTKGFSLIHYSTLEEARKQCILYRCDVGNI) form a DNA-binding region, AP2/ERF 1. 8 disordered regions span residues 2068–2088 (EKTG…NVNN), 2319–2343 (QVDV…SNSK), 2387–2470 (TNDN…NIRS), 2520–2584 (LGNG…NYNN), 2609–2677 (LYGK…PASN), 2840–2860 (MNNN…NNVK), 2881–2902 (NDKL…SSSP), and 2937–2960 (KYVE…KKDE). A compositionally biased stretch (basic residues) spans 2333 to 2342 (KRSKRSKSNS). Low complexity-rich tracts occupy residues 2388–2400 (NDNN…NNND) and 2409–2460 (DNNN…NNND). Positions 2525–2542 (DGEEEGGGDYDEKEDDLL) are enriched in acidic residues. Composition is skewed to low complexity over residues 2557–2584 (NNNN…NYNN) and 2615–2624 (NNNNNNNNNN). Polar residues predominate over residues 2663–2675 (LLNSQVNESSAPA). Low complexity predominate over residues 2841-2858 (NNNNNNNNNNNNNNNNNN). Residues 2943–2953 (NGDKETNDYNT) show a composition bias toward basic and acidic residues. A DNA-binding region (AP2/ERF 2) is located at residues 3268 to 3321 (SLPKGIYYDHAKKLYRVQYIINNSIKTKGFSVKKLGLAQAKIEAESFRNFCLEN). Residues 3369–3391 (KMSINNDGNNNDGNNNDGNNNDD) show a composition bias toward low complexity. Residues 3369–3473 (KMSINNDGNN…NNDNEMSQNE (105 aa)) form a disordered region. The span at 3392–3403 (NNNDDNNNDDNN) shows a compositional bias: acidic residues. Over residues 3404–3457 (NDGNNNDDNNNEGINNDDNNNEGINNDDNNNEGINNNDDNNNNDDNNNEGINND) the composition is skewed to low complexity.

Its subcellular location is the nucleus. This Plasmodium falciparum (isolate 3D7) protein is AP2/ERF domain-containing protein PFD0985w.